The primary structure comprises 729 residues: Fatty acid oxidation complex subunit alpha (729 aa).

The tract at residues 1-189 is enoyl-CoA hydratase/isomerase; the sequence is MLYQGETLQL…KVGLVDAVVA (189 aa). A substrate-binding site is contributed by Asp-296. Positions 311–729 are 3-hydroxyacyl-CoA dehydrogenase; it reads EAPKQAAVLG…LSDVSTGQPA (419 aa). Residues Met-324, Asp-343, 400–402, Lys-407, and Ser-429 contribute to the NAD(+) site; that span reads VVE. His-450 serves as the catalytic For 3-hydroxyacyl-CoA dehydrogenase activity. Position 453 (Asn-453) interacts with NAD(+). Asn-500 and Tyr-660 together coordinate substrate.

The protein in the N-terminal section; belongs to the enoyl-CoA hydratase/isomerase family. This sequence in the C-terminal section; belongs to the 3-hydroxyacyl-CoA dehydrogenase family. As to quaternary structure, heterotetramer of two alpha chains (FadB) and two beta chains (FadA).

It catalyses the reaction a (3S)-3-hydroxyacyl-CoA + NAD(+) = a 3-oxoacyl-CoA + NADH + H(+). It carries out the reaction a (3S)-3-hydroxyacyl-CoA = a (2E)-enoyl-CoA + H2O. The catalysed reaction is a 4-saturated-(3S)-3-hydroxyacyl-CoA = a (3E)-enoyl-CoA + H2O. The enzyme catalyses (3S)-3-hydroxybutanoyl-CoA = (3R)-3-hydroxybutanoyl-CoA. It catalyses the reaction a (3Z)-enoyl-CoA = a 4-saturated (2E)-enoyl-CoA. It carries out the reaction a (3E)-enoyl-CoA = a 4-saturated (2E)-enoyl-CoA. Its pathway is lipid metabolism; fatty acid beta-oxidation. Its function is as follows. Involved in the aerobic and anaerobic degradation of long-chain fatty acids via beta-oxidation cycle. Catalyzes the formation of 3-oxoacyl-CoA from enoyl-CoA via L-3-hydroxyacyl-CoA. It can also use D-3-hydroxyacyl-CoA and cis-3-enoyl-CoA as substrate. The sequence is that of Fatty acid oxidation complex subunit alpha from Serratia proteamaculans (strain 568).